Consider the following 445-residue polypeptide: tRNA-2-methylthio-N(6)-dimethylallyladenosine synthase (445 aa).

The 122-residue stretch at 3–124 (KKLYIKTYGC…LPELISKVVR (122 aa)) folds into the MTTase N-terminal domain. Residues C12, C48, C87, C162, C166, and C169 each contribute to the [4Fe-4S] cluster site. The Radical SAM core domain occupies 148-380 (YPQGASSFIS…QQELTAQQLA (233 aa)). The region spanning 383-445 (ESCVGSIMKV…ASNSLTGEVI (63 aa)) is the TRAM domain.

This sequence belongs to the methylthiotransferase family. MiaB subfamily. As to quaternary structure, monomer. [4Fe-4S] cluster serves as cofactor.

The protein resides in the cytoplasm. It carries out the reaction N(6)-dimethylallyladenosine(37) in tRNA + (sulfur carrier)-SH + AH2 + 2 S-adenosyl-L-methionine = 2-methylsulfanyl-N(6)-dimethylallyladenosine(37) in tRNA + (sulfur carrier)-H + 5'-deoxyadenosine + L-methionine + A + S-adenosyl-L-homocysteine + 2 H(+). In terms of biological role, catalyzes the methylthiolation of N6-(dimethylallyl)adenosine (i(6)A), leading to the formation of 2-methylthio-N6-(dimethylallyl)adenosine (ms(2)i(6)A) at position 37 in tRNAs that read codons beginning with uridine. This Rickettsia felis (strain ATCC VR-1525 / URRWXCal2) (Rickettsia azadi) protein is tRNA-2-methylthio-N(6)-dimethylallyladenosine synthase.